Consider the following 474-residue polypeptide: Probable periplasmic serine endoprotease DegP-like (474 aa).

The N-terminal stretch at 1–26 is a signal peptide; the sequence is MTRMTRHLALWMLLSLAILASQSAMA. Residues His116, Asp146, and Ser219 each act as charge relay system in the active site. Residues 217–219 and 274–278 each bind substrate; these read GNS and LGVMI. PDZ domains are found at residues 263–354 and 360–462; these read LRND…LRNG and TVTV…YRSG.

This sequence belongs to the peptidase S1C family.

The protein localises to the periplasm. The catalysed reaction is Acts on substrates that are at least partially unfolded. The cleavage site P1 residue is normally between a pair of hydrophobic residues, such as Val-|-Val.. Might be efficient in the degradation of transiently denatured and unfolded proteins which accumulate in the periplasm following stress conditions. In Halomonas elongata (strain ATCC 33173 / DSM 2581 / NBRC 15536 / NCIMB 2198 / 1H9), this protein is Probable periplasmic serine endoprotease DegP-like (mucD).